The sequence spans 207 residues: Small ribosomal subunit protein uS2 (207 aa).

The protein belongs to the universal ribosomal protein uS2 family.

This Pyrobaculum islandicum (strain DSM 4184 / JCM 9189 / GEO3) protein is Small ribosomal subunit protein uS2.